The chain runs to 194 residues: Aminodeoxychorismate/anthranilate synthase component 2 (194 aa).

The 194-residue stretch at 1 to 194 (MILMIDNYDS…IETYRKEVIA (194 aa)) folds into the Glutamine amidotransferase type-1 domain. Active-site residues include C79, H168, and E170.

As to quaternary structure, monomer. Heterodimer consisting of two non-identical subunits: a glutamine amidotransferase subunit (PabA) and a aminodeoxychorismate synthase subunit (PabB).

It carries out the reaction chorismate + L-glutamine = anthranilate + pyruvate + L-glutamate + H(+). It catalyses the reaction chorismate + L-glutamine = 4-amino-4-deoxychorismate + L-glutamate. Its pathway is amino-acid biosynthesis; L-tryptophan biosynthesis; L-tryptophan from chorismate: step 1/5. The protein operates within cofactor biosynthesis; tetrahydrofolate biosynthesis; 4-aminobenzoate from chorismate: step 1/2. Its function is as follows. Part of a heterodimeric complex that catalyzes the two-step biosynthesis of 4-amino-4-deoxychorismate (ADC), a precursor of p-aminobenzoate (PABA) and tetrahydrofolate. In the first step, a glutamine amidotransferase (PabA) generates ammonia as a substrate that, along with chorismate, is used in the second step, catalyzed by aminodeoxychorismate synthase (PabB) to produce ADC. PabA converts glutamine into glutamate only in the presence of stoichiometric amounts of PabB. Also involved in the biosynthesis of anthranilate. Complements a glutamine amidotransferase-negative mutant. The polypeptide is Aminodeoxychorismate/anthranilate synthase component 2 (Bacillus subtilis (strain 168)).